The primary structure comprises 356 residues: sn-glycerol-3-phosphate import ATP-binding protein UgpC (356 aa).

Residues 4–235 form the ABC transporter domain; sequence LKLQAVTKSW…PASLFVASFI (232 aa). Residue 37-44 participates in ATP binding; sequence GPSGCGKS.

This sequence belongs to the ABC transporter superfamily. sn-glycerol-3-phosphate importer (TC 3.A.1.1.3) family. As to quaternary structure, the complex is composed of two ATP-binding proteins (UgpC), two transmembrane proteins (UgpA and UgpE) and a solute-binding protein (UgpB).

It localises to the cell inner membrane. The catalysed reaction is sn-glycerol 3-phosphate(out) + ATP + H2O = sn-glycerol 3-phosphate(in) + ADP + phosphate + H(+). Functionally, part of the ABC transporter complex UgpBAEC involved in sn-glycerol-3-phosphate (G3P) import. Responsible for energy coupling to the transport system. The chain is sn-glycerol-3-phosphate import ATP-binding protein UgpC from Escherichia coli O157:H7.